A 248-amino-acid polypeptide reads, in one-letter code: ATP synthase subunit a, chloroplastic (248 aa).

The next 5 membrane-spanning stretches (helical) occupy residues 38-58, 96-116, 135-155, 200-220, and 221-241; these read QVLI…TLAV, VPFI…GALF, INTT…AGFT, LVVA…VMFL, and GLFT…AYIG.

It belongs to the ATPase A chain family. As to quaternary structure, F-type ATPases have 2 components, CF(1) - the catalytic core - and CF(0) - the membrane proton channel. CF(1) has five subunits: alpha(3), beta(3), gamma(1), delta(1), epsilon(1). CF(0) has four main subunits: a, b, b' and c.

The protein localises to the plastid. Its subcellular location is the chloroplast thylakoid membrane. Key component of the proton channel; it plays a direct role in the translocation of protons across the membrane. The polypeptide is ATP synthase subunit a, chloroplastic (Cryptomeria japonica (Japanese cedar)).